Reading from the N-terminus, the 448-residue chain is Asparagine--tRNA ligase (448 aa).

It belongs to the class-II aminoacyl-tRNA synthetase family. As to quaternary structure, homodimer.

Its subcellular location is the cytoplasm. It carries out the reaction tRNA(Asn) + L-asparagine + ATP = L-asparaginyl-tRNA(Asn) + AMP + diphosphate + H(+). This is Asparagine--tRNA ligase from Streptococcus suis (strain 98HAH33).